We begin with the raw amino-acid sequence, 712 residues long: Patatin-like phospholipase domain-containing protein AFUA_1G04970 (712 aa).

A compositionally biased stretch (basic and acidic residues) spans 1-13 (MTSDEKSATRDIY). Residues 1–20 (MTSDEKSATRDIYDPNTLPD) are disordered. Residues 85–105 (WPFLFTVFAWITVLGFAYTLT) form a helical membrane-spanning segment. The region spanning 275–466 (LCLSGGATFA…RTDIPIKALN (192 aa)) is the PNPLA domain. A GXSXG motif is present at residues 306-310 (GTSGG). Ser308 serves as the catalytic Nucleophile. Catalysis depends on Asp453, which acts as the Proton acceptor. The tract at residues 628–688 (RRRQDRAQEH…PDARRSSMFE (61 aa)) is disordered. 2 stretches are compositionally biased toward basic and acidic residues: residues 632–646 (DRAQEHADRMVERLD) and 652–664 (RQSDYKDESHYAE). A compositionally biased stretch (polar residues) spans 667–676 (DSLSATSSRP). A compositionally biased stretch (basic and acidic residues) spans 677–688 (HTPDARRSSMFE).

It belongs to the PLPL family.

The protein localises to the membrane. Functionally, probable lipid hydrolase. This is Patatin-like phospholipase domain-containing protein AFUA_1G04970 from Aspergillus fumigatus (strain ATCC MYA-4609 / CBS 101355 / FGSC A1100 / Af293) (Neosartorya fumigata).